The chain runs to 101 residues: Replication restart protein PriB (101 aa).

The SSB domain occupies 1–101 (MTTNNLVLAG…LHAENVELKT (101 aa)).

It belongs to the PriB family. As to quaternary structure, homodimer. Interacts with PriA and DnaT. Component of the replication restart primosome. Primosome assembly occurs via a 'hand-off' mechanism. PriA binds to replication forks, subsequently PriB then DnaT bind; DnaT then displaces ssDNA to generate the helicase loading substrate.

Its function is as follows. Involved in the restart of stalled replication forks, which reloads the replicative helicase on sites other than the origin of replication; the PriA-PriB pathway is the major replication restart pathway. During primosome assembly it facilitates complex formation between PriA and DnaT on DNA; stabilizes PriA on DNA. Stimulates the DNA unwinding activity of PriA helicase. This chain is Replication restart protein PriB, found in Shewanella pealeana (strain ATCC 700345 / ANG-SQ1).